The following is a 184-amino-acid chain: Chromobox protein homolog hpl-1 (184 aa).

A compositionally biased stretch (polar residues) spans 1–13; the sequence is MSRQNPVRSTRGN. Disordered regions lie at residues 1–27 and 87–115; these read MSRQNPVRSTRGNSLRAREAQQAQDAP and AAKRTTRKRRYSPQPSTSSSAELQPSTSD. A Chromo domain is found at 37–95; it reads FVVEKVLNKRLTRGGSEYYIKWQGFPESECSWEPIENLQCDRMIQEYEKEAAKRTTRKR. Polar residues predominate over residues 99-115; that stretch reads PQPSTSSSAELQPSTSD.

In terms of assembly, interacts with histone demethylase spr-5. Interacts with chromobox protein homolog hpl-2. Interacts with histone H3 tails methylated at 'Lys-9' (H3K9me3) and 'Lys-23'(H3K23me2). Interacts with histone H1 variant his-24 (when monomethylated at 'Lys-14'); the interaction is direct. May interact with the REST corepressor rcor-1, histone deacetylase hda-1, and the histone demethylase lsd-1.

It localises to the nucleus. Functionally, seems to be involved in transcriptional silencing in heterochromatin-like complexes. Involved in epigenetic repression. Probably does not act as global transcriptional repressor. Plays a role in linking epigenetic regulation with the innate immune response. Acting in concert with chromobox protein homolog hpl-2 and histone H1 protein his-24, involved in reproduction, somatic gonad development, male tail development and vulval cell fate decisions; perhaps as a result of modulating expression of Hox genes mab-5 and egl-5. Role in growth and somatic gonad development is antagonized by histone-lysine N-methyltransferase set-2/SET1. Required for larval development, acting redundantly with hpl-2. Plays a role in the formation of the vulva and in fertility, acting together with a CoREST-like complex, and hpl-2. The polypeptide is Chromobox protein homolog hpl-1 (Caenorhabditis elegans).